We begin with the raw amino-acid sequence, 407 residues long: D-galactonate dehydratase family member Pjdr2_1176 (407 aa).

Asp-208 serves as a coordination point for Mg(2+). His-210 serves as a coordination point for D-arabinonate. Mg(2+)-binding residues include Glu-234 and Glu-260. 3 residues coordinate D-arabinonate: Glu-260, Arg-281, and Glu-337.

It belongs to the mandelate racemase/muconate lactonizing enzyme family. GalD subfamily.

In terms of biological role, has no detectable activity with D-mannonate and with a panel of 70 other acid sugars (in vitro), in spite of the conservation of the residues that are expected to be important for catalytic activity and cofactor binding. May have evolved a divergent function. The sequence is that of D-galactonate dehydratase family member Pjdr2_1176 from Paenibacillus sp. (strain JDR-2).